A 157-amino-acid polypeptide reads, in one-letter code: Ribosome-binding factor A (157 aa).

The interval 124-157 is disordered; sequence SAGAQFAGDADPYRKPESDDESDTAAKTDGDAAE. Basic and acidic residues predominate over residues 147–157; that stretch reads TAAKTDGDAAE.

The protein belongs to the RbfA family. In terms of assembly, monomer. Binds 30S ribosomal subunits, but not 50S ribosomal subunits or 70S ribosomes.

It localises to the cytoplasm. Functionally, one of several proteins that assist in the late maturation steps of the functional core of the 30S ribosomal subunit. Associates with free 30S ribosomal subunits (but not with 30S subunits that are part of 70S ribosomes or polysomes). Required for efficient processing of 16S rRNA. May interact with the 5'-terminal helix region of 16S rRNA. This Streptomyces avermitilis (strain ATCC 31267 / DSM 46492 / JCM 5070 / NBRC 14893 / NCIMB 12804 / NRRL 8165 / MA-4680) protein is Ribosome-binding factor A.